The following is a 212-amino-acid chain: Putative DNA-binding protein At1g48610 (212 aa).

A disordered region spans residues 1–130 (MAKTALTPPA…GRPKKDDVAA (130 aa)). A compositionally biased stretch (polar residues) spans 27 to 44 (NKPQTDATGVSATDTASQ). 3 DNA-binding regions (a.T hook) span residues 45–56 (KRGRGRPPKAKS), 70–79 (TKPSGRPKRN), and 94–98 (KKRGR). Positions 57–72 (DSSQIGAVSAKASTKP) are enriched in polar residues. A compositionally biased stretch (low complexity) spans 103–113 (TVTAAVVTTAT). The segment at residues 118-127 (RKRGRPKKDD) is a DNA-binding region (a.T hook 4). The stretch at 176 to 210 (DLKKRTALLQKKVKEAAAKLKQAVTAIDEVQKLAD) forms a coiled coil.

The protein localises to the nucleus. Its function is as follows. May bind DNA. The protein is Putative DNA-binding protein At1g48610 of Arabidopsis thaliana (Mouse-ear cress).